The primary structure comprises 389 residues: Lipid-A-disaccharide synthase (389 aa).

It belongs to the LpxB family.

It catalyses the reaction a lipid X + a UDP-2-N,3-O-bis[(3R)-3-hydroxyacyl]-alpha-D-glucosamine = a lipid A disaccharide + UDP + H(+). The protein operates within bacterial outer membrane biogenesis; LPS lipid A biosynthesis. Functionally, condensation of UDP-2,3-diacylglucosamine and 2,3-diacylglucosamine-1-phosphate to form lipid A disaccharide, a precursor of lipid A, a phosphorylated glycolipid that anchors the lipopolysaccharide to the outer membrane of the cell. This is Lipid-A-disaccharide synthase from Paraburkholderia xenovorans (strain LB400).